The sequence spans 599 residues: Sulfite reductase [NADPH] flavoprotein alpha-component (599 aa).

The region spanning 64–202 (ITLISASQTG…AAAEWRARVV (139 aa)) is the Flavodoxin-like domain. FMN is bound by residues 70 to 75 (SQTGNA), 117 to 120 (STQG), and 153 to 162 (LGDTSYEFFC). The FAD-binding FR-type domain maps to 234 to 448 (EAPLTATLSV…IEHNDNFRLP (215 aa)). FAD is bound by residues threonine 322, alanine 356, 386–389 (RLYS), 404–406 (TVG), tyrosine 410, and 419–422 (GGAS). NADP(+) is bound by residues 519–520 (SR), 525–529 (KIYVQ), and aspartate 561. Tyrosine 599 provides a ligand contact to FAD.

Belongs to the NADPH-dependent sulphite reductase flavoprotein subunit CysJ family. This sequence in the N-terminal section; belongs to the flavodoxin family. It in the C-terminal section; belongs to the flavoprotein pyridine nucleotide cytochrome reductase family. In terms of assembly, alpha(8)-beta(8). The alpha component is a flavoprotein, the beta component is a hemoprotein. FAD is required as a cofactor. The cofactor is FMN.

It carries out the reaction hydrogen sulfide + 3 NADP(+) + 3 H2O = sulfite + 3 NADPH + 4 H(+). It functions in the pathway sulfur metabolism; hydrogen sulfide biosynthesis; hydrogen sulfide from sulfite (NADPH route): step 1/1. Component of the sulfite reductase complex that catalyzes the 6-electron reduction of sulfite to sulfide. This is one of several activities required for the biosynthesis of L-cysteine from sulfate. The flavoprotein component catalyzes the electron flow from NADPH -&gt; FAD -&gt; FMN to the hemoprotein component. This Klebsiella pneumoniae subsp. pneumoniae (strain ATCC 700721 / MGH 78578) protein is Sulfite reductase [NADPH] flavoprotein alpha-component.